We begin with the raw amino-acid sequence, 261 residues long: 3-deoxy-manno-octulosonate cytidylyltransferase 1 (261 aa).

Belongs to the KdsB family.

It localises to the cytoplasm. It catalyses the reaction 3-deoxy-alpha-D-manno-oct-2-ulosonate + CTP = CMP-3-deoxy-beta-D-manno-octulosonate + diphosphate. It participates in nucleotide-sugar biosynthesis; CMP-3-deoxy-D-manno-octulosonate biosynthesis; CMP-3-deoxy-D-manno-octulosonate from 3-deoxy-D-manno-octulosonate and CTP: step 1/1. It functions in the pathway bacterial outer membrane biogenesis; lipopolysaccharide biosynthesis. Its function is as follows. Activates KDO (a required 8-carbon sugar) for incorporation into bacterial lipopolysaccharide in Gram-negative bacteria. This Burkholderia lata (strain ATCC 17760 / DSM 23089 / LMG 22485 / NCIMB 9086 / R18194 / 383) protein is 3-deoxy-manno-octulosonate cytidylyltransferase 1.